Consider the following 452-residue polypeptide: MASVPTGENWTDGTAGVGSHTGNLSAALGITEWLALQAGNFSSALGLPVTSQAPSQVRANLTNQFVQPSWRIALWSLAYGLVVAVAVFGNLIVIWIILAHKRMRTVTNYFLVNLAFSDASVAAFNTLVNFIYGVHSEWYFGANYCRFQNFFPITAVFASIYSMTAIAVDRYMAIIDPLKPRLSATATKIVIGSIWILAFLLAFPQCLYSKIKVMPGRTLCYVQWPEGPKQHFTYHIIVIILVYCFPLLIMGVTYTIVGITLWGGEIPGDTCDKYHEQLKAKRKVVKMMIIVVVTFAICWLPYHVYFILTAIYQQLNRWKYIQQVYLASFWLAMSSTMYNPIIYCCLNKRFRAGFKRAFRWCPFIQVSSYDELELKTTRFHPTRQSSLYTVSRMESVTVLYDPSEGDPAKSSRKKRAVPRDPSANGCSHREFKSASTTSSFISSPYTSVDEYS.

The Extracellular portion of the chain corresponds to 1-71 (MASVPTGENW…TNQFVQPSWR (71 aa)). N-linked (GlcNAc...) asparagine glycans are attached at residues Asn-9, Asn-23, Asn-40, and Asn-60. A helical transmembrane segment spans residues 72–94 (IALWSLAYGLVVAVAVFGNLIVI). The Cytoplasmic portion of the chain corresponds to 95 to 104 (WIILAHKRMR). A helical transmembrane segment spans residues 105–126 (TVTNYFLVNLAFSDASVAAFNT). The Extracellular portion of the chain corresponds to 127–146 (LVNFIYGVHSEWYFGANYCR). Cys-145 and Cys-220 are disulfide-bonded. A helical transmembrane segment spans residues 147–168 (FQNFFPITAVFASIYSMTAIAV). The Cytoplasmic segment spans residues 169-188 (DRYMAIIDPLKPRLSATATK). A helical membrane pass occupies residues 189 to 209 (IVIGSIWILAFLLAFPQCLYS). Residues 210–232 (KIKVMPGRTLCYVQWPEGPKQHF) lie on the Extracellular side of the membrane. Residues 233 to 257 (TYHIIVIILVYCFPLLIMGVTYTIV) form a helical membrane-spanning segment. Topologically, residues 258 to 286 (GITLWGGEIPGDTCDKYHEQLKAKRKVVK) are cytoplasmic. A helical membrane pass occupies residues 287–308 (MMIIVVVTFAICWLPYHVYFIL). At 309–321 (TAIYQQLNRWKYI) the chain is on the extracellular side. The helical transmembrane segment at 322–346 (QQVYLASFWLAMSSTMYNPIIYCCL) threads the bilayer. Residues 347–452 (NKRFRAGFKR…SPYTSVDEYS (106 aa)) are Cytoplasmic-facing. Cys-361 carries the S-palmitoyl cysteine lipid modification. The interval 401–452 (DPSEGDPAKSSRKKRAVPRDPSANGCSHREFKSASTTSSFISSPYTSVDEYS) is disordered. Positions 433-452 (SASTTSSFISSPYTSVDEYS) are enriched in low complexity.

The protein belongs to the G-protein coupled receptor 1 family. The anchoring of this receptor to the plasma membrane is probably mediated by the palmitoylation of a cysteine residue.

The protein resides in the cell membrane. This is a receptor for the tachykinin neuropeptide neuromedin-K (neurokinin B). It is associated with G proteins that activate a phosphatidylinositol-calcium second messenger system. The chain is Neuromedin-K receptor (Tacr3) from Mus musculus (Mouse).